Here is a 342-residue protein sequence, read N- to C-terminus: uncharacterized protein (342 aa).

It belongs to the cycloisomerase 2 family.

This is an uncharacterized protein from Staphylococcus epidermidis (strain ATCC 12228 / FDA PCI 1200).